The sequence spans 296 residues: Non-homologous end joining protein Ku (296 aa).

Residues 11-187 (TFGLVNIPVK…ELPEAGEPSS (177 aa)) form the Ku domain. Positions 254 to 296 (AAARRRGDEHEAPARGERRHAAAAAARTTGRPRAARASRKKRG) are disordered. Over residues 258–273 (RRGDEHEAPARGERRH) the composition is skewed to basic and acidic residues. Positions 275 to 285 (AAAAARTTGRP) are enriched in low complexity. Positions 286–296 (RAARASRKKRG) are enriched in basic residues.

This sequence belongs to the prokaryotic Ku family. As to quaternary structure, homodimer. Interacts with LigD.

With LigD forms a non-homologous end joining (NHEJ) DNA repair enzyme, which repairs dsDNA breaks with reduced fidelity. Binds linear dsDNA with 5'- and 3'- overhangs but not closed circular dsDNA nor ssDNA. Recruits and stimulates the ligase activity of LigD. This Anaeromyxobacter sp. (strain K) protein is Non-homologous end joining protein Ku.